Consider the following 254-residue polypeptide: PF03932 family protein CutC (254 aa).

The protein belongs to the CutC family.

The protein localises to the cytoplasm. The chain is PF03932 family protein CutC from Yersinia pestis bv. Antiqua (strain Antiqua).